A 148-amino-acid chain; its full sequence is Large ribosomal subunit protein uL15 (148 aa).

The disordered stretch occupies residues M1–L57. Residues K10–G20 are compositionally biased toward basic residues. Residues I23–M35 show a composition bias toward gly residues.

The protein belongs to the universal ribosomal protein uL15 family. In terms of assembly, part of the 50S ribosomal subunit.

Functionally, binds to the 23S rRNA. This is Large ribosomal subunit protein uL15 from Nostoc sp. (strain PCC 7120 / SAG 25.82 / UTEX 2576).